A 180-amino-acid chain; its full sequence is uncharacterized protein (180 aa).

The N-terminal stretch at 1 to 24 is a signal peptide; that stretch reads MKKKTIFQCVILFFSILNIHVGMA.

Part of the elfADCG-ycbUVF fimbrial operon, which promotes adhesion of bacteria to different abiotic surfaces. This is an uncharacterized protein from Escherichia coli (strain K12).